The sequence spans 414 residues: 2,3-diketo-5-methylthiopentyl-1-phosphate enolase (414 aa).

Lys-99 acts as the Proton acceptor in catalysis. Substrate is bound by residues Lys-148, 174–177, His-265, Gly-338, and 360–361; these read KDDE and GG. Residues Lys-174, Asp-176, and Glu-177 each contribute to the Mg(2+) site. Lys-174 carries the post-translational modification N6-carboxylysine.

It belongs to the RuBisCO large chain family. Type IV subfamily. Homodimer. Mg(2+) is required as a cofactor.

It carries out the reaction 5-methylsulfanyl-2,3-dioxopentyl phosphate = 2-hydroxy-5-methylsulfanyl-3-oxopent-1-enyl phosphate. Its pathway is amino-acid biosynthesis; L-methionine biosynthesis via salvage pathway; L-methionine from S-methyl-5-thio-alpha-D-ribose 1-phosphate: step 3/6. Catalyzes the enolization of 2,3-diketo-5-methylthiopentyl-1-phosphate (DK-MTP-1-P) into 2-hydroxy-3-keto-5-methylthiopentenyl-1-phosphate (HK-MTPenyl-1-P). The chain is 2,3-diketo-5-methylthiopentyl-1-phosphate enolase from Bacillus cereus (strain AH820).